The primary structure comprises 570 residues: Putative ABC transporter ATP-binding protein SACOL2708 (570 aa).

2 consecutive ABC transporter domains span residues 6–247 (ISFK…GIRE) and 304–537 (LELN…ASLR). Residues 40-47 (GASGSGKS) and 338-345 (GHNGAGKS) contribute to the ATP site.

The protein belongs to the ABC transporter superfamily.

The protein localises to the cell membrane. Its function is as follows. Probably part of an ABC transporter complex. Responsible for energy coupling to the transport system. This is Putative ABC transporter ATP-binding protein SACOL2708 from Staphylococcus aureus (strain COL).